The primary structure comprises 208 residues: MARYKGPVCRLCRREGEKLYLKGQRCYTDKCAIDRRSYPPGEHGRRRNKPTEYGMQLREKQKVKRIYGILEKQFKRYFDMAEKMPGVTGENFLSILERRLDNVVYRLGLATSRNEARQFVLHGHILVNGRKVNIPSYLVDEGDVISVKDSSRKSKRFKEVFEFNEDLTPPKWLSVNLEKAEGKVVAMPTREDIDYPVEEHLIVEFYSR.

Positions R98–F161 constitute an S4 RNA-binding domain.

The protein belongs to the universal ribosomal protein uS4 family. As to quaternary structure, part of the 30S ribosomal subunit. Contacts protein S5. The interaction surface between S4 and S5 is involved in control of translational fidelity.

Its function is as follows. One of the primary rRNA binding proteins, it binds directly to 16S rRNA where it nucleates assembly of the body of the 30S subunit. In terms of biological role, with S5 and S12 plays an important role in translational accuracy. The protein is Small ribosomal subunit protein uS4 of Halothermothrix orenii (strain H 168 / OCM 544 / DSM 9562).